A 460-amino-acid polypeptide reads, in one-letter code: Malonyl-coenzyme A:anthocyanin 3-O-glucoside-6''-O-malonyltransferase (460 aa).

Residues histidine 173 and aspartate 400 each act as proton acceptor in the active site.

This sequence belongs to the plant acyltransferase family.

The catalysed reaction is an anthocyanidin 3-O-beta-D-glucoside + malonyl-CoA = an anthocyanidin 3-O-(6-O-malonyl-beta-D-glucoside) + CoA. Completely inhibited by 5 mM N-ethylmaleimide or 0.1 mM Cu(2+). Partially inhibited by 0.1 mM Fe(2+) or 0.1 mM Hg(2+). Catalyzes the transfer of the malonyl group from malonyl-CoA to pelargonidin 3-O-glucoside to produce pelargonidin 3-O-6''-O-malonylglucoside. Can also transfer the malonyl group from malonyl-CoA to cyanidin 3-O-glucoside, delphinidin 3-O-glucoside and quercetin 3-O-glucoside. The polypeptide is Malonyl-coenzyme A:anthocyanin 3-O-glucoside-6''-O-malonyltransferase (Dahlia pinnata (Pinnate dahlia)).